The following is a 481-amino-acid chain: O-phosphoseryl-tRNA(Sec) selenium transferase (481 aa).

Residues 1 to 36 (MKANFGKKEGEYSRLVSKSSNKLLNSLWEKKQIPEE) are tetramerization. Arg69 is a binding site for pyridoxal 5'-phosphate. The segment at 90-100 (GRSGNLLEIQP) is phosphate loop (P-loop). The substrate site is built by Arg91, Ser92, and Gln99. Lys277 carries the post-translational modification N6-(pyridoxal phosphate)lysine. Residue Arg306 participates in substrate binding.

It belongs to the SepSecS family. Homotetramer formed by a catalytic dimer and a non-catalytic dimer serving as a binding platform that orients tRNASec for catalysis. Each tetramer binds the CCA ends of two tRNAs which point to the active sites of the catalytic dimer. The cofactor is pyridoxal 5'-phosphate.

It localises to the cytoplasm. It carries out the reaction O-phospho-L-seryl-tRNA(Sec) + selenophosphate + H2O = L-selenocysteinyl-tRNA(Sec) + 2 phosphate. It functions in the pathway aminoacyl-tRNA biosynthesis; selenocysteinyl-tRNA(Sec) biosynthesis; selenocysteinyl-tRNA(Sec) from L-seryl-tRNA(Sec) (archaeal/eukaryal route): step 2/2. Converts O-phosphoseryl-tRNA(Sec) to selenocysteinyl-tRNA(Sec) required for selenoprotein biosynthesis. In Caenorhabditis elegans, this protein is O-phosphoseryl-tRNA(Sec) selenium transferase (secs-1).